The following is a 328-amino-acid chain: NADH-quinone oxidoreductase subunit H (328 aa).

A run of 8 helical transmembrane segments spans residues 10-30, 80-100, 118-138, 155-175, 191-211, 243-263, 272-292, and 306-326; these read IIKI…GTYF, IAPV…PFLP, IGIL…LLGG, AVFI…IMMV, ITSW…IAAF, LFFI…SLLF, LLGA…FLWT, and WLCW…TAIV.

The protein belongs to the complex I subunit 1 family. NDH-1 is composed of 14 different subunits. Subunits NuoA, H, J, K, L, M, N constitute the membrane sector of the complex.

Its subcellular location is the cell inner membrane. The enzyme catalyses a quinone + NADH + 5 H(+)(in) = a quinol + NAD(+) + 4 H(+)(out). Functionally, NDH-1 shuttles electrons from NADH, via FMN and iron-sulfur (Fe-S) centers, to quinones in the respiratory chain. The immediate electron acceptor for the enzyme in this species is believed to be ubiquinone. Couples the redox reaction to proton translocation (for every two electrons transferred, four hydrogen ions are translocated across the cytoplasmic membrane), and thus conserves the redox energy in a proton gradient. This subunit may bind ubiquinone. The protein is NADH-quinone oxidoreductase subunit H of Sulfurimonas denitrificans (strain ATCC 33889 / DSM 1251) (Thiomicrospira denitrificans (strain ATCC 33889 / DSM 1251)).